The chain runs to 320 residues: 4-hydroxy-3-methylbut-2-enyl diphosphate reductase 2 (320 aa).

Cysteine 18 is a binding site for [4Fe-4S] cluster. (2E)-4-hydroxy-3-methylbut-2-enyl diphosphate-binding residues include histidine 47 and histidine 81. Positions 47 and 81 each coordinate dimethylallyl diphosphate. Isopentenyl diphosphate-binding residues include histidine 47 and histidine 81. Cysteine 103 contacts [4Fe-4S] cluster. Residue histidine 131 coordinates (2E)-4-hydroxy-3-methylbut-2-enyl diphosphate. Residue histidine 131 coordinates dimethylallyl diphosphate. Histidine 131 lines the isopentenyl diphosphate pocket. Residue glutamate 133 is the Proton donor of the active site. Threonine 172 contacts (2E)-4-hydroxy-3-methylbut-2-enyl diphosphate. Residue cysteine 202 coordinates [4Fe-4S] cluster. Residues serine 230, serine 231, asparagine 232, and serine 275 each contribute to the (2E)-4-hydroxy-3-methylbut-2-enyl diphosphate site. Residues serine 230, serine 231, asparagine 232, and serine 275 each contribute to the dimethylallyl diphosphate site. Residues serine 230, serine 231, asparagine 232, and serine 275 each coordinate isopentenyl diphosphate.

Belongs to the IspH family. The cofactor is [4Fe-4S] cluster.

The enzyme catalyses isopentenyl diphosphate + 2 oxidized [2Fe-2S]-[ferredoxin] + H2O = (2E)-4-hydroxy-3-methylbut-2-enyl diphosphate + 2 reduced [2Fe-2S]-[ferredoxin] + 2 H(+). The catalysed reaction is dimethylallyl diphosphate + 2 oxidized [2Fe-2S]-[ferredoxin] + H2O = (2E)-4-hydroxy-3-methylbut-2-enyl diphosphate + 2 reduced [2Fe-2S]-[ferredoxin] + 2 H(+). It participates in isoprenoid biosynthesis; dimethylallyl diphosphate biosynthesis; dimethylallyl diphosphate from (2E)-4-hydroxy-3-methylbutenyl diphosphate: step 1/1. It functions in the pathway isoprenoid biosynthesis; isopentenyl diphosphate biosynthesis via DXP pathway; isopentenyl diphosphate from 1-deoxy-D-xylulose 5-phosphate: step 6/6. Its function is as follows. Catalyzes the conversion of 1-hydroxy-2-methyl-2-(E)-butenyl 4-diphosphate (HMBPP) into a mixture of isopentenyl diphosphate (IPP) and dimethylallyl diphosphate (DMAPP). Acts in the terminal step of the DOXP/MEP pathway for isoprenoid precursor biosynthesis. This is 4-hydroxy-3-methylbut-2-enyl diphosphate reductase 2 from Rhodopseudomonas palustris (strain ATCC BAA-98 / CGA009).